The chain runs to 2153 residues: Non-reducing polyketide synthase albA (2153 aa).

Residues 8–244 are N-terminal acylcarrier protein transacylase domain (SAT); sequence YLFGDQTSDI…VKAPIHGPYH (237 aa). Residues 375-806 form the Ketosynthase family 3 (KS3) domain; the sequence is NSKIAIIGMS…GGNTALLLED (432 aa). Residues Cys547, His682, and His724 each act as for beta-ketoacyl synthase activity in the active site. A malonyl-CoA:ACP transacylase (MAT) domain region spans residues 912–1232; the sequence is FVFTGQGAQY…LASLHLAGID (321 aa). Ser1001 functions as the For acyl/malonyl transferase activity in the catalytic mechanism. The interval 1286–1425 is N-terminal hotdog fold; it reads HEYLTTAAQK…CTVRFFDCAA (140 aa). In terms of domain architecture, PKS/mFAS DH spans 1286–1598; it reads HEYLTTAAQK…FQALSRKILD (313 aa). The tract at residues 1290–1603 is product template (PT) domain; sequence TTAAQKVIET…RKILDTVLPP (314 aa). Residue His1326 is the Proton acceptor; for dehydratase activity of the active site. The tract at residues 1452–1598 is C-terminal hotdog fold; it reads DAHRLGRGMV…FQALSRKILD (147 aa). Asp1511 (proton donor; for dehydratase activity) is an active-site residue. The disordered stretch occupies residues 1608–1643; it reads KGPARPAASAQKAAPAAAASKSRASAPAPAKPAAKP. A compositionally biased stretch (low complexity) spans 1610-1643; sequence PARPAASAQKAAPAAAASKSRASAPAPAKPAAKP. The region spanning 1643 to 1720 is the Carrier 1 domain; sequence PSAPSLVKRA…DFKQFLAPMS (78 aa). Ser1680 is subject to O-(pantetheine 4'-phosphoryl)serine. The disordered stretch occupies residues 1720–1765; it reads SQGEASDGSTSDPESSSSFNGGSSTDESSAGSPVSSPPNEKVTQVE. Residues 1725 to 1748 are compositionally biased toward low complexity; that stretch reads SDGSTSDPESSSSFNGGSSTDESS. Residues 1749–1765 are compositionally biased toward polar residues; that stretch reads AGSPVSSPPNEKVTQVE. One can recognise a Carrier 2 domain in the interval 1764–1841; it reads VEQHATIKEI…DVEDALGLKP (78 aa). Ser1801 is modified (O-(pantetheine 4'-phosphoryl)serine). The interval 1879 to 2151 is claisen cyclase domain; that stretch reads SPHPRSTSIL…ELGSFIGNAM (273 aa). Residue Ser1969 is the For Claisen cyclase activity of the active site.

The enzyme catalyses 6 malonyl-CoA + acetyl-CoA + 6 H(+) = naphtopyrone YWA1 + 6 CO2 + 7 CoA + H2O. The protein operates within secondary metabolite biosynthesis. In terms of biological role, non-reducing polyketide synthase; part of the gene cluster that mediates the biosynthesis of aurasperone B, a dimeric gamma-naphthopyrone. The first step in the biosynthesis of aurasperone B is the production of gamma-naphthopyrone precursor YWA1 by the non-reducing polyketide synthase albA, via condensation of one acetyl-CoA starter unit with 6 malonyl-CoA units. YWA1 is then methylated by aunE at position C-6 to yield foncesin which is further methylated at position C-8 by aunD to produce fonsecin B. A key enzyme in the biosynthetic pathway is the cytochrome P450 monooxygenase aunB which catalyzes the oxidative dimerization of fonsecin B to aurasperone B. AunB also catalyzes the oxidative dimerization of rubrofusarin B into aurasperone A. In Aspergillus niger (strain ATCC MYA-4892 / CBS 513.88 / FGSC A1513), this protein is Non-reducing polyketide synthase albA.